We begin with the raw amino-acid sequence, 469 residues long: Zinc finger CCCH domain-containing protein 30 (469 aa).

The C3H1-type zinc-finger motif lies at 415-443 (VRPMKPCAYFNSPKGCRNGASCTFLHDAS). Residues 444–469 (APTRKDHQKQKGSKRIKLDNTMGGRN) form a disordered region. The span at 449-458 (DHQKQKGSKR) shows a compositional bias: basic residues.

In Oryza sativa subsp. japonica (Rice), this protein is Zinc finger CCCH domain-containing protein 30.